Consider the following 428-residue polypeptide: Keratin, type I cytoskeletal 18-A (428 aa).

The head stretch occupies residues 2-78 (SFRSQTSSTT…SVKGSGLFNN (77 aa)). Positions 79 to 114 (EKETMQILNDRLASYLETVRNLEQANSKLELQIRET) are coil 1A. The 312-residue stretch at 79–390 (EKETMQILND…RLLDGEDFRL (312 aa)) folds into the IF rod domain. The interval 115–131 (LEKRGPTTQDYSAYEKV) is linker 1. The tract at residues 132–223 (VEDLKSQIYD…RSHQTDVEEL (92 aa)) is coil 1B. Residues 224–247 (RKHISECGVQVDVDAPKGQDLSKI) are linker 12. A coil 2 region spans residues 248–385 (MEEIRAQYET…IATYRRLLDG (138 aa)). The tract at residues 386–428 (EDFRLQDALAVQTTKVQKKITVTETVVDGKVVSQSSEVQEIKK) is tail.

It belongs to the intermediate filament family. In terms of assembly, heterotetramer of two type I and two type II keratins. Keratin-18 associates with keratin-8. Post-translationally, phosphorylated. Proteolytically cleaved by caspases during epithelial cell apoptosis.

When phosphorylated, plays a role in filament reorganization. The protein is Keratin, type I cytoskeletal 18-A of Polypterus senegalus (Senegal bichir).